The primary structure comprises 162 residues: NADH-quinone oxidoreductase subunit I (162 aa).

2 consecutive 4Fe-4S ferredoxin-type domains span residues 53 to 83 (LRRY…IEAE) and 93 to 122 (TRYD…EGPN). Positions 63, 66, 69, 73, 102, 105, 108, and 112 each coordinate [4Fe-4S] cluster.

It belongs to the complex I 23 kDa subunit family. As to quaternary structure, NDH-1 is composed of 14 different subunits. Subunits NuoA, H, J, K, L, M, N constitute the membrane sector of the complex. Requires [4Fe-4S] cluster as cofactor.

The protein resides in the cell inner membrane. It catalyses the reaction a quinone + NADH + 5 H(+)(in) = a quinol + NAD(+) + 4 H(+)(out). In terms of biological role, NDH-1 shuttles electrons from NADH, via FMN and iron-sulfur (Fe-S) centers, to quinones in the respiratory chain. The immediate electron acceptor for the enzyme in this species is believed to be ubiquinone. Couples the redox reaction to proton translocation (for every two electrons transferred, four hydrogen ions are translocated across the cytoplasmic membrane), and thus conserves the redox energy in a proton gradient. In Rhodospirillum rubrum (strain ATCC 11170 / ATH 1.1.1 / DSM 467 / LMG 4362 / NCIMB 8255 / S1), this protein is NADH-quinone oxidoreductase subunit I.